A 215-amino-acid chain; its full sequence is Ribosomal RNA small subunit methyltransferase G (215 aa).

Residues Gly77, Phe82, 130–131, and Arg146 contribute to the S-adenosyl-L-methionine site; that span reads IE.

It belongs to the methyltransferase superfamily. RNA methyltransferase RsmG family.

The protein resides in the cytoplasm. It carries out the reaction guanosine(527) in 16S rRNA + S-adenosyl-L-methionine = N(7)-methylguanosine(527) in 16S rRNA + S-adenosyl-L-homocysteine. Specifically methylates the N7 position of guanine in position 527 of 16S rRNA. In Bartonella bacilliformis (strain ATCC 35685 / KC583 / Herrer 020/F12,63), this protein is Ribosomal RNA small subunit methyltransferase G.